A 158-amino-acid polypeptide reads, in one-letter code: Ribosome maturation factor RimP (158 aa).

The protein belongs to the RimP family.

The protein localises to the cytoplasm. Its function is as follows. Required for maturation of 30S ribosomal subunits. The polypeptide is Ribosome maturation factor RimP (Aquifex aeolicus (strain VF5)).